Consider the following 81-residue polypeptide: Large ribosomal subunit protein bL31B (81 aa).

The protein belongs to the bacterial ribosomal protein bL31 family. Type B subfamily. Part of the 50S ribosomal subunit.

In Limosilactobacillus fermentum (strain NBRC 3956 / LMG 18251) (Lactobacillus fermentum), this protein is Large ribosomal subunit protein bL31B.